Here is a 201-residue protein sequence, read N- to C-terminus: tRNA (guanine-N(7)-)-methyltransferase (201 aa).

S-adenosyl-L-methionine contacts are provided by glutamate 33, glutamate 58, aspartate 85, and aspartate 106. Aspartate 106 is an active-site residue. Residues lysine 110, aspartate 142, and 180 to 183 contribute to the substrate site; that span reads TTYE.

This sequence belongs to the class I-like SAM-binding methyltransferase superfamily. TrmB family.

It carries out the reaction guanosine(46) in tRNA + S-adenosyl-L-methionine = N(7)-methylguanosine(46) in tRNA + S-adenosyl-L-homocysteine. It functions in the pathway tRNA modification; N(7)-methylguanine-tRNA biosynthesis. In terms of biological role, catalyzes the formation of N(7)-methylguanine at position 46 (m7G46) in tRNA. This Mesomycoplasma hyopneumoniae (strain J / ATCC 25934 / NCTC 10110) (Mycoplasma hyopneumoniae) protein is tRNA (guanine-N(7)-)-methyltransferase.